Here is a 188-residue protein sequence, read N- to C-terminus: Elongation factor P (188 aa).

The residue at position 34 (K34) is an N6-(3,6-diaminohexanoyl)-5-hydroxylysine.

It belongs to the elongation factor P family. In terms of processing, may be beta-lysylated on the epsilon-amino group of Lys-34 by the combined action of EpmA and EpmB, and then hydroxylated on the C5 position of the same residue by EpmC (if this protein is present). Lysylation is critical for the stimulatory effect of EF-P on peptide-bond formation. The lysylation moiety may extend toward the peptidyltransferase center and stabilize the terminal 3-CCA end of the tRNA. Hydroxylation of the C5 position on Lys-34 may allow additional potential stabilizing hydrogen-bond interactions with the P-tRNA.

It localises to the cytoplasm. Its pathway is protein biosynthesis; polypeptide chain elongation. Its function is as follows. Involved in peptide bond synthesis. Alleviates ribosome stalling that occurs when 3 or more consecutive Pro residues or the sequence PPG is present in a protein, possibly by augmenting the peptidyl transferase activity of the ribosome. Modification of Lys-34 is required for alleviation. In Hamiltonella defensa subsp. Acyrthosiphon pisum (strain 5AT), this protein is Elongation factor P.